The chain runs to 329 residues: GTPase Obg (329 aa).

Residues 1–159 (MQFIDQARIT…WLLHLELKLL (159 aa)) enclose the Obg domain. The region spanning 160 to 328 (AEVGIIGLPN…LLNKIWSKLE (169 aa)) is the OBG-type G domain. ATP contacts are provided by residues 166–173 (GLPNAGKS), 191–195 (FTTLI), 213–216 (DIPG), 280–283 (NKKE), and 309–311 (SAI). Mg(2+) is bound by residues serine 173 and threonine 193.

The protein belongs to the TRAFAC class OBG-HflX-like GTPase superfamily. OBG GTPase family. Monomer. Mg(2+) serves as cofactor.

The protein resides in the cytoplasm. Its function is as follows. An essential GTPase which binds GTP, GDP and possibly (p)ppGpp with moderate affinity, with high nucleotide exchange rates and a fairly low GTP hydrolysis rate. Plays a role in control of the cell cycle, stress response, ribosome biogenesis and in those bacteria that undergo differentiation, in morphogenesis control. The sequence is that of GTPase Obg from Prochlorococcus marinus (strain SARG / CCMP1375 / SS120).